Consider the following 303-residue polypeptide: Ferrochelatase (303 aa).

His185 and Glu262 together coordinate Fe cation.

Belongs to the ferrochelatase family.

The protein resides in the cytoplasm. It carries out the reaction heme b + 2 H(+) = protoporphyrin IX + Fe(2+). It functions in the pathway porphyrin-containing compound metabolism; protoheme biosynthesis; protoheme from protoporphyrin-IX: step 1/1. In terms of biological role, catalyzes the ferrous insertion into protoporphyrin IX. The polypeptide is Ferrochelatase (Campylobacter jejuni (strain RM1221)).